A 110-amino-acid chain; its full sequence is Putative anti-sigma factor antagonist TM_1442 (110 aa).

Residues 4-110 (LKLDIVEQDD…FKITDTVEEA (107 aa)) enclose the STAS domain. Position 59 is a phosphoserine (serine 59).

The protein belongs to the anti-sigma-factor antagonist family. In terms of processing, phosphorylated on a serine residue.

In the phosphorylated form it could act as an anti-anti-sigma factor that counteracts an anti-sigma factor and thus releases a sigma factor from inhibition. The sequence is that of Putative anti-sigma factor antagonist TM_1442 from Thermotoga maritima (strain ATCC 43589 / DSM 3109 / JCM 10099 / NBRC 100826 / MSB8).